Consider the following 824-residue polypeptide: Probable acyl-CoA dehydrogenase IBR3 (824 aa).

An N-acetylglycine modification is found at glycine 2. Residues phenylalanine 555–serine 565, tryptophan 589–serine 591, arginine 706, glutamine 776, and glutamine 776–alanine 780 contribute to the FAD site. Residues serine 822–leucine 824 carry the Microbody targeting signal motif.

The protein belongs to the acyl-CoA dehydrogenase family. FAD serves as cofactor.

Its subcellular location is the peroxisome. It catalyses the reaction a 2,3-saturated acyl-CoA + A = a 2,3-dehydroacyl-CoA + AH2. Its function is as follows. Involved with IBR1 and IBR10 in the peroxisomal beta-oxidation of indole-3-butyric acid (IBA) to form indole-3-acetic acid (IAA), a biologically active auxin. May be responsible for catalyzing the first step in IBA-CoA beta-oxidation. May play a role in defense response to pathogenic bacteria. This Arabidopsis thaliana (Mouse-ear cress) protein is Probable acyl-CoA dehydrogenase IBR3.